A 744-amino-acid polypeptide reads, in one-letter code: Scytalone dehydratase-like protein Arp1 (744 aa).

Residue Tyr-621 coordinates substrate. Active-site residues include His-656 and His-681. Residue Asn-702 coordinates substrate.

The protein belongs to the scytalone dehydratase family. In terms of assembly, homotrimer. Each subunit contains an active site, located in the central part of the hydrophobic core of the monomer, which functions independently.

In terms of biological role, scytalone dehydratase-like protein; part of the Pks2 gene cluster that mediates the formation of infectious structures (appressoria), enabling these fungi to kill insects faster. The product of the Pks2 gene cluster is different from the one of Pks1 and has still not been identified. This chain is Scytalone dehydratase-like protein Arp1, found in Metarhizium brunneum (strain ARSEF 3297).